The primary structure comprises 132 residues: Small ribosomal subunit protein uS8c (132 aa).

This sequence belongs to the universal ribosomal protein uS8 family. Part of the 30S ribosomal subunit.

It localises to the plastid. The protein resides in the chloroplast. Its function is as follows. One of the primary rRNA binding proteins, it binds directly to 16S rRNA central domain where it helps coordinate assembly of the platform of the 30S subunit. This Platanus occidentalis (Sycamore) protein is Small ribosomal subunit protein uS8c (rps8).